The chain runs to 187 residues: MTVHIHPYVDNGVKQGSGHFAGGTLVCKCHDRPVKVAVKGDVAHNHACGCTKCWKPSGATFSVIAVVPRQNVTVLENGDKLKIVDPSAVIQRYACTGCGTHMYGRIENTGHPFYGLDFIHPELFQEQGSAAPAFAAFVSSVIESGVKPEQMGEIRARLKELGLEPYDCLSPALMDAIATHVAKAKAA.

Residues 20–167 (FAGGTLVCKC…LKELGLEPYD (148 aa)) form the CENP-V/GFA domain. Positions 27, 29, 48, 50, 53, 95, and 98 each coordinate Zn(2+).

Belongs to the Gfa family. The cofactor is Zn(2+).

The enzyme catalyses S-(hydroxymethyl)glutathione = glutathione + formaldehyde. Its pathway is one-carbon metabolism; formaldehyde degradation; formate from formaldehyde (glutathione route): step 1/3. Its function is as follows. Catalyzes the condensation of formaldehyde and glutathione to S-hydroxymethylglutathione. The polypeptide is Glutathione-dependent formaldehyde-activating enzyme (Bradyrhizobium sp. (strain BTAi1 / ATCC BAA-1182)).